The chain runs to 358 residues: Zinc-type alcohol dehydrogenase-like protein YogA (358 aa).

The protein belongs to the zinc-containing alcohol dehydrogenase family. Quinone oxidoreductase subfamily.

Its pathway is secondary metabolite biosynthesis. Functionally, zinc-type alcohol dehydrogenase-like protein; part of the gene cluster that mediates the biosynthesis of phomenoic acid, a long chain aliphatic carboxylic acid that does not appear to be essential for pathogenicity but may play a role in allowing to outcompete other fungi in the environmental niche via its antifungal properties. The polyketide synthase produces the long methylated aliphatic carboxylic acid chain of phomenoic acid. The cluster-specific cytochrome P450 monooxygenase may then hydroxylate the methyl group of carbon 31. The putative dehydrogenase YogA, which has no obvious role in phomenoic acid biosynthesis, may further modify phomenoic acid to produce a compound not identified yet. This Leptosphaeria maculans (strain JN3 / isolate v23.1.3 / race Av1-4-5-6-7-8) (Blackleg fungus) protein is Zinc-type alcohol dehydrogenase-like protein YogA.